The following is a 292-amino-acid chain: Homoserine kinase (292 aa).

ATP is bound at residue 84 to 94; the sequence is PLSRGLGSSSA.

The protein belongs to the GHMP kinase family. Homoserine kinase subfamily.

Its subcellular location is the cytoplasm. It carries out the reaction L-homoserine + ATP = O-phospho-L-homoserine + ADP + H(+). It functions in the pathway amino-acid biosynthesis; L-threonine biosynthesis; L-threonine from L-aspartate: step 4/5. In terms of biological role, catalyzes the ATP-dependent phosphorylation of L-homoserine to L-homoserine phosphate. This is Homoserine kinase from Campylobacter jejuni subsp. jejuni serotype O:2 (strain ATCC 700819 / NCTC 11168).